Reading from the N-terminus, the 29-residue chain is Glucagon (29 aa).

Belongs to the glucagon family.

Its subcellular location is the secreted. Its function is as follows. Glucagon plays a key role in glucose metabolism and homeostasis. Regulates blood glucose by increasing gluconeogenesis and decreasing glycolysis. The protein is Glucagon (gcg) of Lampetra fluviatilis (European river lamprey).